A 155-amino-acid chain; its full sequence is 3-hydroxyacyl-[acyl-carrier-protein] dehydratase FabZ (155 aa).

H54 is a catalytic residue.

The protein belongs to the thioester dehydratase family. FabZ subfamily.

The protein resides in the cytoplasm. The catalysed reaction is a (3R)-hydroxyacyl-[ACP] = a (2E)-enoyl-[ACP] + H2O. Functionally, involved in unsaturated fatty acids biosynthesis. Catalyzes the dehydration of short chain beta-hydroxyacyl-ACPs and long chain saturated and unsaturated beta-hydroxyacyl-ACPs. The polypeptide is 3-hydroxyacyl-[acyl-carrier-protein] dehydratase FabZ (Burkholderia lata (strain ATCC 17760 / DSM 23089 / LMG 22485 / NCIMB 9086 / R18194 / 383)).